Reading from the N-terminus, the 410-residue chain is uncharacterized protein (410 aa).

An NAD(+)-binding site is contributed by 11–39; sequence VLVIGGGPSGTALSAELAARGLDVQQLAP.

The protein belongs to the lycopene cyclase family.

This is an uncharacterized protein from Deinococcus radiodurans (strain ATCC 13939 / DSM 20539 / JCM 16871 / CCUG 27074 / LMG 4051 / NBRC 15346 / NCIMB 9279 / VKM B-1422 / R1).